Consider the following 235-residue polypeptide: MTQQFYVSPEQLMKDRADFARKGIARGRSVVVISCADGIALIAENPSPSLHKIGEIYDKIAFAAVGKYNEFESLRQAGVRYADVRGYSYDREDVTARGLASVYAQSLGAVFTAEQKPFEVELAVAEVGVTQEQDHLYRLTFDGSIADENGFVVMGGLADQISDVVNGAWEPELNLAGAMQLALRALATNKEVEELPAAAVEAAVLYRDSESNRGSRRAFRRLLPEDMTRLLTEES.

Belongs to the peptidase T1A family. As to quaternary structure, the 20S proteasome core is composed of 14 alpha and 14 beta subunits that assemble into four stacked heptameric rings, resulting in a barrel-shaped structure. The two inner rings, each composed of seven catalytic beta subunits, are sandwiched by two outer rings, each composed of seven alpha subunits. The catalytic chamber with the active sites is on the inside of the barrel. Has a gated structure, the ends of the cylinder being occluded by the N-termini of the alpha-subunits. Is capped by the proteasome-associated ATPase, ARC.

The protein localises to the cytoplasm. Its pathway is protein degradation; proteasomal Pup-dependent pathway. With respect to regulation, the formation of the proteasomal ATPase ARC-20S proteasome complex, likely via the docking of the C-termini of ARC into the intersubunit pockets in the alpha-rings, may trigger opening of the gate for substrate entry. Interconversion between the open-gate and close-gate conformations leads to a dynamic regulation of the 20S proteasome proteolysis activity. In terms of biological role, component of the proteasome core, a large protease complex with broad specificity involved in protein degradation. This is Proteasome subunit alpha from Paenarthrobacter aurescens (strain TC1).